A 139-amino-acid chain; its full sequence is MSWPGLLYGLTTSLSRGLALAPQLWAARSMATLNQMHRLGPRKEPPKRLGPTEGRPQLKGVVLRTFIRKPKKPNSANRKCCRVRLSTGKEAVCFIPGEGHTLQEHHVVLVEGGRTQDLPGVKLKVVRGKYDCGHVQKKK.

The N-terminal 29 residues, 1–29, are a transit peptide targeting the mitochondrion; it reads MSWPGLLYGLTTSLSRGLALAPQLWAARS.

The protein belongs to the universal ribosomal protein uS12 family. As to quaternary structure, component of the mitochondrial ribosome small subunit (28S) which comprises a 12S rRNA and about 30 distinct proteins.

The protein resides in the mitochondrion. This chain is Small ribosomal subunit protein uS12m (Mrps12), found in Mus musculus (Mouse).